We begin with the raw amino-acid sequence, 79 residues long: Small ribosomal subunit protein bS18 (79 aa).

This sequence belongs to the bacterial ribosomal protein bS18 family. As to quaternary structure, part of the 30S ribosomal subunit. Forms a tight heterodimer with protein bS6.

Functionally, binds as a heterodimer with protein bS6 to the central domain of the 16S rRNA, where it helps stabilize the platform of the 30S subunit. The sequence is that of Small ribosomal subunit protein bS18 from Bradyrhizobium diazoefficiens (strain JCM 10833 / BCRC 13528 / IAM 13628 / NBRC 14792 / USDA 110).